We begin with the raw amino-acid sequence, 400 residues long: Tryptophan synthase beta chain (400 aa).

Position 91 is an N6-(pyridoxal phosphate)lysine (Lys91).

Belongs to the TrpB family. As to quaternary structure, tetramer of two alpha and two beta chains. The cofactor is pyridoxal 5'-phosphate.

The catalysed reaction is (1S,2R)-1-C-(indol-3-yl)glycerol 3-phosphate + L-serine = D-glyceraldehyde 3-phosphate + L-tryptophan + H2O. It participates in amino-acid biosynthesis; L-tryptophan biosynthesis; L-tryptophan from chorismate: step 5/5. Functionally, the beta subunit is responsible for the synthesis of L-tryptophan from indole and L-serine. The protein is Tryptophan synthase beta chain of Listeria monocytogenes serotype 4b (strain CLIP80459).